The primary structure comprises 257 residues: Thiazole synthase (257 aa).

Residue Lys96 is the Schiff-base intermediate with DXP of the active site. 1-deoxy-D-xylulose 5-phosphate contacts are provided by residues Gly157, Ala184–Gly185, and Asn206–Thr207.

Belongs to the ThiG family. Homotetramer. Forms heterodimers with either ThiH or ThiS.

The protein resides in the cytoplasm. The catalysed reaction is [ThiS sulfur-carrier protein]-C-terminal-Gly-aminoethanethioate + 2-iminoacetate + 1-deoxy-D-xylulose 5-phosphate = [ThiS sulfur-carrier protein]-C-terminal Gly-Gly + 2-[(2R,5Z)-2-carboxy-4-methylthiazol-5(2H)-ylidene]ethyl phosphate + 2 H2O + H(+). It functions in the pathway cofactor biosynthesis; thiamine diphosphate biosynthesis. Functionally, catalyzes the rearrangement of 1-deoxy-D-xylulose 5-phosphate (DXP) to produce the thiazole phosphate moiety of thiamine. Sulfur is provided by the thiocarboxylate moiety of the carrier protein ThiS. In vitro, sulfur can be provided by H(2)S. In Allorhizobium ampelinum (strain ATCC BAA-846 / DSM 112012 / S4) (Agrobacterium vitis (strain S4)), this protein is Thiazole synthase.